Reading from the N-terminus, the 1047-residue chain is Atrial natriuretic peptide receptor 2 (1047 aa).

Positions methionine 1–alanine 22 are cleaved as a signal peptide. At arginine 23–isoleucine 458 the chain is on the extracellular side. Residues asparagine 24 and asparagine 35 are each glycosylated (N-linked (GlcNAc...) asparagine). Residues cysteine 75 and cysteine 101 are joined by a disulfide bond. Asparagine 161, asparagine 195, asparagine 244, asparagine 277, and asparagine 349 each carry an N-linked (GlcNAc...) asparagine glycan. The chain crosses the membrane as a helical span at residues valine 459–phenylalanine 478. Residues arginine 479 to leucine 1047 lie on the Cytoplasmic side of the membrane. Serine 513 is subject to Phosphoserine. In terms of domain architecture, Protein kinase spans serine 513–isoleucine 786. Residue threonine 516 is modified to Phosphothreonine. Residues serine 518, serine 522, serine 523, and serine 526 each carry the phosphoserine modification. A Phosphothreonine modification is found at threonine 529. The Guanylate cyclase domain maps to threonine 861–glutamate 991.

The protein belongs to the adenylyl cyclase class-4/guanylyl cyclase family. In terms of processing, phosphorylated. Phosphorylation of the protein kinase-like domain is required for full activation by CNP. Post-translationally, glycosylated.

It is found in the cell membrane. The enzyme catalyses GTP = 3',5'-cyclic GMP + diphosphate. Functionally, receptor for the C-type natriuretic peptide NPPC/CNP hormone. Has guanylate cyclase activity upon binding of its ligand. May play a role in the regulation of skeletal growth. This chain is Atrial natriuretic peptide receptor 2 (NPR2), found in Homo sapiens (Human).